We begin with the raw amino-acid sequence, 263 residues long: Hydroxyacylglutathione hydrolase (263 aa).

7 residues coordinate Zn(2+): histidine 60, histidine 62, aspartate 64, histidine 65, histidine 120, aspartate 137, and histidine 175.

It belongs to the metallo-beta-lactamase superfamily. Glyoxalase II family. Monomer. Requires Zn(2+) as cofactor.

It carries out the reaction an S-(2-hydroxyacyl)glutathione + H2O = a 2-hydroxy carboxylate + glutathione + H(+). It functions in the pathway secondary metabolite metabolism; methylglyoxal degradation; (R)-lactate from methylglyoxal: step 2/2. In terms of biological role, thiolesterase that catalyzes the hydrolysis of S-D-lactoyl-glutathione to form glutathione and D-lactic acid. In Shewanella pealeana (strain ATCC 700345 / ANG-SQ1), this protein is Hydroxyacylglutathione hydrolase.